A 185-amino-acid chain; its full sequence is Elongation factor P (185 aa).

Belongs to the elongation factor P family.

The protein localises to the cytoplasm. It participates in protein biosynthesis; polypeptide chain elongation. Its function is as follows. Involved in peptide bond synthesis. Stimulates efficient translation and peptide-bond synthesis on native or reconstituted 70S ribosomes in vitro. Probably functions indirectly by altering the affinity of the ribosome for aminoacyl-tRNA, thus increasing their reactivity as acceptors for peptidyl transferase. This is Elongation factor P from Halalkalibacterium halodurans (strain ATCC BAA-125 / DSM 18197 / FERM 7344 / JCM 9153 / C-125) (Bacillus halodurans).